The following is a 229-amino-acid chain: Endonuclease NucS (229 aa).

The protein belongs to the NucS endonuclease family.

It is found in the cytoplasm. Functionally, cleaves both 3' and 5' ssDNA extremities of branched DNA structures. The polypeptide is Endonuclease NucS (Corynebacterium diphtheriae (strain ATCC 700971 / NCTC 13129 / Biotype gravis)).